A 631-amino-acid chain; its full sequence is Forkhead box protein O1 (631 aa).

Pro residues predominate over residues 1–11 (MAEAPQPPPPL). 4 disordered regions span residues 1–57 (MAEA…PAAG), 90–147 (DIRQ…SRRN), 223–324 (SSWW…MPEQ), and 372–404 (PNSS…PNSE). 2 stretches are compositionally biased toward low complexity: residues 37–48 (NPSSSANSSPAP) and 100–135 (QQQQ…PLGA). Residues 149–243 (WGNLSYADLI…KNGKSPRRRA (95 aa)) constitute a DNA-binding region (fork-head). A compositionally biased stretch (basic residues) spans 253-264 (AKSRGRAAKKKA). The span at 265 to 282 (SMQSSQDGSSDSPGSQFS) shows a compositional bias: low complexity. Polar residues-rich tracts occupy residues 303–315 (RPRT…TISG) and 381–403 (ASMM…SPNS).

Phosphorylated by AKT1; insulin-induced. Post-translationally, IGF1 rapidly induces phosphorylation of Thr-28, Ser-245 and Ser-308. Phosphorylation of Ser-245 decreases DNA-binding activity and promotes the phosphorylation of Thr-28, and Ser-308, which leads to nuclear exclusion and loss of function. Phosphorylation of Ser-318 is independent of IGF1 and leads to reduced function. Localized to the animal hemisphere during early cleavage stages. At early tadpole stages, expressed in the branchial arches, pronephros and liver. Within the head, expressed in the forming thyroid gland and in head mesenchyme anterior to the eyes.

The protein localises to the cytoplasm. It is found in the nucleus. Functionally, transcription factor that regulates metabolic homeostasis in response to oxidative stress. Binds to the consensus sequence 5'-TT[G/A]TTTTG-3' and the related Daf-16 family binding element (DBE) with consensus sequence 5'-TT[G/A]TTTAC-3'. Main regulator of redox balance and osteoblast numbers and controls bone mass. Orchestrates the endocrine function of the skeleton in regulating glucose metabolism. Also acts as a key regulator of chondrogenic commitment of skeletal progenitor cells in response to lipid availability: when lipids levels are low, translocates to the nucleus and promotes expression of sox9, which induces chondrogenic commitment and suppresses fatty acid oxidation. Acts synergistically with atf4 to suppress osteocalcin/bglap activity, increasing glucose levels and triggering glucose intolerance and insulin insensitivity. Also suppresses the transcriptional activity of runx2, an upstream activator of osteocalcin/bglap. May act as a positive regulator of apoptosis in cardiac smooth muscle cells as a result of its transcriptional activation of pro-apoptotic genes. The polypeptide is Forkhead box protein O1 (Xenopus laevis (African clawed frog)).